Here is a 408-residue protein sequence, read N- to C-terminus: Heparan-sulfate 6-O-sulfotransferase 1 (408 aa).

The Cytoplasmic segment spans residues 8-14 (MVERTSK). Residues 15 to 35 (FLLIVAASVCFMLILYQYVGP) traverse the membrane as a helical; Signal-anchor for type II membrane protein segment. Topologically, residues 36–408 (GLSLGAPSGR…DYMSHIIEKW (373 aa)) are lumenal. Residue 90–98 (HIQKTGGTT) coordinates 3'-phosphoadenylyl sulfate. Residues 120–121 (KK), arginine 137, tryptophan 142, and histidine 147 each bind substrate. Histidine 147 (proton acceptor) is an active-site residue. 3'-phosphoadenylyl sulfate-binding residues include arginine 182 and serine 190. The substrate site is built by histidine 194 and tryptophan 201. Asparagine 261 carries N-linked (GlcNAc...) asparagine glycosylation. A 3'-phosphoadenylyl sulfate-binding site is contributed by 314 to 316 (MQY). Asparagine 317 carries N-linked (GlcNAc...) asparagine glycosylation. 320–321 (RA) lines the 3'-phosphoadenylyl sulfate pocket. Asparagine 328 is a glycosylation site (N-linked (GlcNAc...) asparagine). The stretch at 348–382 (AKDLFQQRYQYKRQLERMEQRIKNREERLLHRSNE) forms a coiled coil. The interval 376 to 396 (LLHRSNEALPKEETEEQGRLP) is disordered.

The protein belongs to the sulfotransferase 6 family. N-glycosylated.

It is found in the membrane. The catalysed reaction is alpha-D-glucosaminyl-[heparan sulfate](n) + 3'-phosphoadenylyl sulfate = 6-sulfo-alpha-D-glucosaminyl-[heparan sulfate](n) + adenosine 3',5'-bisphosphate + H(+). 6-O-sulfation enzyme which catalyzes the transfer of sulfate from 3'-phosphoadenosine 5'-phosphosulfate (PAPS) to position 6 of the N-sulfoglucosamine residue (GlcNS) of heparan sulfate. May also play a role in limb development. In Gallus gallus (Chicken), this protein is Heparan-sulfate 6-O-sulfotransferase 1.